A 148-amino-acid polypeptide reads, in one-letter code: Large ribosomal subunit protein bL9 (148 aa).

Belongs to the bacterial ribosomal protein bL9 family.

In terms of biological role, binds to the 23S rRNA. This chain is Large ribosomal subunit protein bL9, found in Listeria welshimeri serovar 6b (strain ATCC 35897 / DSM 20650 / CCUG 15529 / CIP 8149 / NCTC 11857 / SLCC 5334 / V8).